A 313-amino-acid chain; its full sequence is UPF0761 membrane protein VV1_0885 (313 aa).

A run of 6 helical transmembrane segments spans residues Tyr41–Leu61, Met104–Asp124, Ala139–Ala159, Leu185–Val205, Ala215–Ala235, and Ala249–Ile269. The tract at residues Pro294–Ser313 is disordered. A compositionally biased stretch (basic and acidic residues) spans Glu299–Ser313.

Belongs to the UPF0761 family.

The protein localises to the cell inner membrane. In Vibrio vulnificus (strain CMCP6), this protein is UPF0761 membrane protein VV1_0885.